The primary structure comprises 206 residues: Ion-translocating oxidoreductase complex subunit G (206 aa).

Residues 9 to 29 (GITLALFAAGSTGLTAAINQM) form a helical membrane-spanning segment. At threonine 174 the chain carries FMN phosphoryl threonine.

It belongs to the RnfG family. In terms of assembly, the complex is composed of six subunits: RsxA, RsxB, RsxC, RsxD, RsxE and RsxG. FMN serves as cofactor.

Its subcellular location is the cell inner membrane. In terms of biological role, part of a membrane-bound complex that couples electron transfer with translocation of ions across the membrane. Required to maintain the reduced state of SoxR. Probably transfers electron from NAD(P)H to SoxR. In Escherichia coli (strain K12), this protein is Ion-translocating oxidoreductase complex subunit G.